Reading from the N-terminus, the 23-residue chain is Dermaseptin-4 (23 aa).

Q23 is subject to Glutamine amide.

Expressed by the skin glands.

Its subcellular location is the secreted. Functionally, antimicrobial peptide, active against the Gram-positive bacterium S.aureus, and the Gram-negative bacteria E.coli and P.aeruginosa. Has hemolytic activity (5% hemolysis at 128 ug/ml). The polypeptide is Dermaseptin-4 (Phyllomedusa tarsius (Brownbelly leaf frog)).